The sequence spans 289 residues: CRISPR system Cms protein Csm4 (289 aa).

This sequence belongs to the CRISPR-associated Csm4 family. In terms of assembly, probably part of the Csm effector complex, that includes Cas10, Csm2, Csm3, Csm4, Csm5 and mature crRNA. Interacts with Cas10 (csm1).

CRISPR (clustered regularly interspaced short palindromic repeat) is an adaptive immune system that provides protection against mobile genetic elements (viruses, transposable elements and conjugative plasmids). CRISPR clusters contain spacers, sequences complementary to antecedent mobile elements, and target invading nucleic acids. CRISPR clusters are transcribed and processed into CRISPR RNA (crRNA). The type III-A Csm effector complex binds crRNA and acts as a crRNA-guided RNase, DNase and cyclic oligoadenylate synthase; binding of target RNA cognate to the crRNA is required for all activities. Its function is as follows. The subunit probably binds to the 5' handle of the crRNA, helping in discrimination between self- and non-self. The protein is CRISPR system Cms protein Csm4 of Thermococcus onnurineus (strain NA1).